The following is a 107-amino-acid chain: Urease subunit beta (107 aa).

This sequence belongs to the urease beta subunit family. In terms of assembly, heterotrimer of UreA (gamma), UreB (beta) and UreC (alpha) subunits. Three heterotrimers associate to form the active enzyme.

It localises to the cytoplasm. The enzyme catalyses urea + 2 H2O + H(+) = hydrogencarbonate + 2 NH4(+). Its pathway is nitrogen metabolism; urea degradation; CO(2) and NH(3) from urea (urease route): step 1/1. The chain is Urease subunit beta from Bacillus sp. (strain TB-90).